The chain runs to 319 residues: Acetyl-coenzyme A carboxylase carboxyl transferase subunit beta, chloroplastic (319 aa).

The CoA carboxyltransferase N-terminal domain occupies 47–319; the sequence is LWVQCDNCES…ELFYVLQSSS (273 aa). Residues C51, C54, C70, and C73 each coordinate Zn(2+). A C4-type zinc finger spans residues 51-73; that stretch reads CDNCESLLYIRFLRENKSVCEEC.

Belongs to the AccD/PCCB family. In terms of assembly, acetyl-CoA carboxylase is a heterohexamer composed of biotin carboxyl carrier protein, biotin carboxylase and 2 subunits each of ACCase subunit alpha and ACCase plastid-coded subunit beta (accD). Zn(2+) is required as a cofactor.

The protein localises to the plastid. It is found in the chloroplast stroma. It carries out the reaction N(6)-carboxybiotinyl-L-lysyl-[protein] + acetyl-CoA = N(6)-biotinyl-L-lysyl-[protein] + malonyl-CoA. Its pathway is lipid metabolism; malonyl-CoA biosynthesis; malonyl-CoA from acetyl-CoA: step 1/1. Component of the acetyl coenzyme A carboxylase (ACC) complex. Biotin carboxylase (BC) catalyzes the carboxylation of biotin on its carrier protein (BCCP) and then the CO(2) group is transferred by the transcarboxylase to acetyl-CoA to form malonyl-CoA. This chain is Acetyl-coenzyme A carboxylase carboxyl transferase subunit beta, chloroplastic, found in Picea abies (Norway spruce).